A 611-amino-acid chain; its full sequence is Probable potassium transport system protein Kup 1 (611 aa).

The next 12 helical transmembrane spans lie at 6–26 (LMVGALGVVYGDIGTSPLYTM), 44–64 (MLSLIVWTLLITTSIKYVAVV), 90–110 (LGVIAMGLIGAALLYGDGAIT), 129–149 (ISPYIVTLSAIILVGLFALQA), 158–178 (LFGPVMIAWFIVIGILGLFGI), 193–213 (GLSYLFSHGMTGFLVLGAVFL), 237–257 (WYGLVLPCLILNYAGQTAVVV), 280–300 (LVALATVATIIASQAIISGAF), 328–348 (IYIGFVNWTLMALTLGLTLGF), 354–374 (LAAAFGIAVSLTMLLTSILMF), 385–405 (LAASLLTAGLFVVVDMSFVSA), and 410–430 (VLEGGWFPLVVAAVIFFLMMT).

Belongs to the HAK/KUP transporter (TC 2.A.72) family.

Its subcellular location is the cell inner membrane. It catalyses the reaction K(+)(in) + H(+)(in) = K(+)(out) + H(+)(out). Functionally, transport of potassium into the cell. Likely operates as a K(+):H(+) symporter. In Bradyrhizobium sp. (strain BTAi1 / ATCC BAA-1182), this protein is Probable potassium transport system protein Kup 1.